The sequence spans 158 residues: MSKVSYYTPEGLKKLRDELNHLKDVERPKASEAIGEARDKGDLSENAEYDAAKEAQGLLEMKISKMEEVVANARVIDESQLDTSKVLVHSHVKIKNQTNGAEMTYKLVAQSEADLKSGKISVDSPIGKGLLGKKVGDTAEIEVPNGTVKFDVIEIWRE.

Residues 24 to 43 show a composition bias toward basic and acidic residues; the sequence is DVERPKASEAIGEARDKGDL. The disordered stretch occupies residues 24 to 47; it reads DVERPKASEAIGEARDKGDLSENA. Residues 48–68 are a coiled coil; sequence EYDAAKEAQGLLEMKISKMEE.

The protein belongs to the GreA/GreB family.

Functionally, necessary for efficient RNA polymerase transcription elongation past template-encoded arresting sites. The arresting sites in DNA have the property of trapping a certain fraction of elongating RNA polymerases that pass through, resulting in locked ternary complexes. Cleavage of the nascent transcript by cleavage factors such as GreA or GreB allows the resumption of elongation from the new 3'terminus. GreA releases sequences of 2 to 3 nucleotides. This chain is Transcription elongation factor GreA, found in Christiangramia forsetii (strain DSM 17595 / CGMCC 1.15422 / KT0803) (Gramella forsetii).